We begin with the raw amino-acid sequence, 155 residues long: Ciliary microtubule inner protein 2C (155 aa).

This sequence belongs to the CIMIP2 family.

The protein localises to the cytoplasm. Its subcellular location is the cytoskeleton. It is found in the cilium axoneme. Microtubule inner protein (MIP) part of the dynein-decorated doublet microtubules (DMTs) in cilia axoneme, which is required for motile cilia beating. The sequence is that of Ciliary microtubule inner protein 2C (cimip2cb) from Xenopus laevis (African clawed frog).